Reading from the N-terminus, the 486-residue chain is Bifunctional protein HldE (486 aa).

A ribokinase region spans residues 1-329; that stretch reads MSSRLSGLLD…AALSVAGPVG (329 aa). Residue 204-207 coordinates ATP; the sequence is NAFE. The active site involves aspartate 274. The segment at 355–486 is cytidylyltransferase; it reads FTNGCFDILH…AIIARSETGK (132 aa).

In the N-terminal section; belongs to the carbohydrate kinase PfkB family. This sequence in the C-terminal section; belongs to the cytidylyltransferase family. Homodimer.

The enzyme catalyses D-glycero-beta-D-manno-heptose 7-phosphate + ATP = D-glycero-beta-D-manno-heptose 1,7-bisphosphate + ADP + H(+). It carries out the reaction D-glycero-beta-D-manno-heptose 1-phosphate + ATP + H(+) = ADP-D-glycero-beta-D-manno-heptose + diphosphate. Its pathway is nucleotide-sugar biosynthesis; ADP-L-glycero-beta-D-manno-heptose biosynthesis; ADP-L-glycero-beta-D-manno-heptose from D-glycero-beta-D-manno-heptose 7-phosphate: step 1/4. It participates in nucleotide-sugar biosynthesis; ADP-L-glycero-beta-D-manno-heptose biosynthesis; ADP-L-glycero-beta-D-manno-heptose from D-glycero-beta-D-manno-heptose 7-phosphate: step 3/4. Catalyzes the phosphorylation of D-glycero-D-manno-heptose 7-phosphate at the C-1 position to selectively form D-glycero-beta-D-manno-heptose-1,7-bisphosphate. Functionally, catalyzes the ADP transfer from ATP to D-glycero-beta-D-manno-heptose 1-phosphate, yielding ADP-D-glycero-beta-D-manno-heptose. The polypeptide is Bifunctional protein HldE (Hyphomonas neptunium (strain ATCC 15444)).